We begin with the raw amino-acid sequence, 553 residues long: Dihydroxy-acid dehydratase (553 aa).

Aspartate 78 is a Mg(2+) binding site. Cysteine 119 provides a ligand contact to [2Fe-2S] cluster. Residues aspartate 120 and lysine 121 each coordinate Mg(2+). Residue lysine 121 is modified to N6-carboxylysine. Cysteine 191 lines the [2Fe-2S] cluster pocket. Glutamate 444 provides a ligand contact to Mg(2+). Serine 470 serves as the catalytic Proton acceptor.

It belongs to the IlvD/Edd family. As to quaternary structure, homodimer. It depends on [2Fe-2S] cluster as a cofactor. Requires Mg(2+) as cofactor.

The enzyme catalyses (2R)-2,3-dihydroxy-3-methylbutanoate = 3-methyl-2-oxobutanoate + H2O. It carries out the reaction (2R,3R)-2,3-dihydroxy-3-methylpentanoate = (S)-3-methyl-2-oxopentanoate + H2O. It functions in the pathway amino-acid biosynthesis; L-isoleucine biosynthesis; L-isoleucine from 2-oxobutanoate: step 3/4. The protein operates within amino-acid biosynthesis; L-valine biosynthesis; L-valine from pyruvate: step 3/4. Functionally, functions in the biosynthesis of branched-chain amino acids. Catalyzes the dehydration of (2R,3R)-2,3-dihydroxy-3-methylpentanoate (2,3-dihydroxy-3-methylvalerate) into 2-oxo-3-methylpentanoate (2-oxo-3-methylvalerate) and of (2R)-2,3-dihydroxy-3-methylbutanoate (2,3-dihydroxyisovalerate) into 2-oxo-3-methylbutanoate (2-oxoisovalerate), the penultimate precursor to L-isoleucine and L-valine, respectively. The chain is Dihydroxy-acid dehydratase from Methanococcoides burtonii (strain DSM 6242 / NBRC 107633 / OCM 468 / ACE-M).